Reading from the N-terminus, the 1547-residue chain is Mediator of RNA polymerase II transcription subunit 12 (1547 aa).

Disordered regions lie at residues 1–63 (MTSR…RPHI) and 1356–1509 (PVIP…QQRD). Residues 1357 to 1369 (VIPPLEPPQPPNP) show a composition bias toward pro residues. The segment covering 1379–1390 (YQSPQMTSNTAA) has biased composition (polar residues). Composition is skewed to low complexity over residues 1398–1413 (QQQQ…QQTQ) and 1446–1468 (LSPL…RASQ). Composition is skewed to polar residues over residues 1469 to 1480 (PSPIHSQRPTSV) and 1499 to 1509 (AHTSYVNQQRD).

This sequence belongs to the Mediator complex subunit 12 family. Component of the SRB8-11 complex, which itself associates with the Mediator complex.

It localises to the nucleus. Component of the SRB8-11 complex. The SRB8-11 complex is a regulatory module of the Mediator complex which is itself involved in regulation of basal and activated RNA polymerase II-dependent transcription. The SRB8-11 complex may be involved in the transcriptional repression of a subset of genes regulated by Mediator. It may inhibit the association of the Mediator complex with RNA polymerase II to form the holoenzyme complex. This Phaeosphaeria nodorum (strain SN15 / ATCC MYA-4574 / FGSC 10173) (Glume blotch fungus) protein is Mediator of RNA polymerase II transcription subunit 12 (SRB8).